A 202-amino-acid chain; its full sequence is Lipoprotein signal peptidase (202 aa).

The interval 1-29 (MPDEPTGSADPLTSTEEAGGAGEPNAPAP) is disordered. Helical transmembrane passes span 35 to 55 (MLLSVAVVVLTLDIVTKVVAV), 88 to 108 (GYTWVLTLIATGVVVGIFWMG), and 112 to 132 (VSPWWALGLGMILGGAMGNLV). Residues aspartate 148 and aspartate 162 contribute to the active site. The chain crosses the membrane as a helical span at residues 160–180 (VADPSVVGGAILLVILSIFGF).

This sequence belongs to the peptidase A8 family.

It localises to the cell membrane. It carries out the reaction Release of signal peptides from bacterial membrane prolipoproteins. Hydrolyzes -Xaa-Yaa-Zaa-|-(S,diacylglyceryl)Cys-, in which Xaa is hydrophobic (preferably Leu), and Yaa (Ala or Ser) and Zaa (Gly or Ala) have small, neutral side chains.. Its pathway is protein modification; lipoprotein biosynthesis (signal peptide cleavage). This protein specifically catalyzes the removal of signal peptides from prolipoproteins. The chain is Lipoprotein signal peptidase from Mycobacterium bovis (strain ATCC BAA-935 / AF2122/97).